The chain runs to 121 residues: Flagellar protein FliT (121 aa).

The segment at 1-50 is required for homodimerization; the sequence is MNNAPHLYFAWQQLVEKSQLMLRLATEEQWDELIASEMAYVNAVQEIAHL. Residues 60-98 are fliD binding; that stretch reads MQEQLRPMLHLILDNESKVKQLLQIRMDELAKLVGQSSV.

This sequence belongs to the FliT family. Homodimer. Interacts with FliD and FlhC.

The protein localises to the cytoplasm. The protein resides in the cytosol. Its function is as follows. Dual-function protein that regulates the transcription of class 2 flagellar operons and that also acts as an export chaperone for the filament-capping protein FliD. As a transcriptional regulator, acts as an anti-FlhDC factor; it directly binds FlhC, thus inhibiting the binding of the FlhC/FlhD complex to class 2 promoters, resulting in decreased expression of class 2 flagellar operons. As a chaperone, effects FliD transition to the membrane by preventing its premature polymerization, and by directing it to the export apparatus. The protein is Flagellar protein FliT of Escherichia coli O17:K52:H18 (strain UMN026 / ExPEC).